Reading from the N-terminus, the 221-residue chain is GTP cyclohydrolase III (221 aa).

The protein belongs to the archaeal-type GTP cyclohydrolase family.

The enzyme catalyses GTP + 3 H2O = 2-amino-5-formylamino-6-(5-phospho-D-ribosylamino)pyrimidin-4(3H)-one + 2 phosphate + 2 H(+). Catalyzes the formation of 2-amino-5-formylamino-6-ribofuranosylamino-4(3H)-pyrimidinone ribonucleotide monophosphate and inorganic phosphate from GTP. Also has an independent pyrophosphate phosphohydrolase activity. This is GTP cyclohydrolase III from Pyrobaculum aerophilum (strain ATCC 51768 / DSM 7523 / JCM 9630 / CIP 104966 / NBRC 100827 / IM2).